The sequence spans 348 residues: Ion-translocating oxidoreductase complex subunit D (348 aa).

The next 3 membrane-spanning stretches (helical) occupy residues 20 to 39 (VMRL…CYLF), 67 to 87 (YVVS…LIAV), and 124 to 144 (AMVG…NWMA). Thr-187 carries the FMN phosphoryl threonine modification. The next 4 helical transmembrane spans lie at 221-241 (WINL…LIPW), 244-264 (PVAM…LAPA), 266-286 (FAMP…FFII), and 300-320 (LVFG…GGYP).

It belongs to the NqrB/RnfD family. The complex is composed of six subunits: RnfA, RnfB, RnfC, RnfD, RnfE and RnfG. It depends on FMN as a cofactor.

The protein resides in the cell inner membrane. Part of a membrane-bound complex that couples electron transfer with translocation of ions across the membrane. In Tolumonas auensis (strain DSM 9187 / NBRC 110442 / TA 4), this protein is Ion-translocating oxidoreductase complex subunit D.